The following is a 60-amino-acid chain: Large ribosomal subunit protein bL32 (60 aa).

Residues 1–60 (MAVQQNKKSPSKRGMHRSHNALTVPGIAVEPTTGETHMRHHISPNGFYRGRQVLKNKSEA) form a disordered region. A compositionally biased stretch (basic residues) spans 9–19 (SPSKRGMHRSH).

This sequence belongs to the bacterial ribosomal protein bL32 family.

The chain is Large ribosomal subunit protein bL32 from Acidovorax ebreus (strain TPSY) (Diaphorobacter sp. (strain TPSY)).